The chain runs to 192 residues: Lumican (192 aa).

LRR repeat units lie at residues 1–23 (LQWLILDHNLLENSKIKGKVFSK), 26–46 (QLKKLHINHNNLTESVGPLPK), 47–68 (SLEDLQLTHNKITKLGSFDGLL), 69–90 (NLTFVHLQHNQLKEDAVSAAFK), 94–114 (SLEYLDLSFNQMSKLPSGLPA), 115–136 (SLLTLYLDNNKISDIPDEYFKR), 139–162 (GLQYLRLSHNELADSGIPGNSFNI), 164–185 (SLVELDLSYNKLKNIPTVNENL), and 186–192 (ENYYLEV).

It belongs to the small leucine-rich proteoglycan (SLRP) family. SLRP class II subfamily. In terms of assembly, binds to laminin. In terms of processing, sulfated on tyrosine residue(s). Post-translationally, contains keratan sulfate.

The protein resides in the secreted. Its subcellular location is the extracellular space. It is found in the extracellular matrix. This is Lumican (LUM) from Oryctolagus cuniculus (Rabbit).